A 309-amino-acid polypeptide reads, in one-letter code: UDP-N-acetylenolpyruvoylglucosamine reductase (309 aa).

An FAD-binding PCMH-type domain is found at 34–221 (RVGGPAQVLF…TAAREAAQPI (188 aa)). Residue R179 is part of the active site. The active-site Proton donor is S228. The active site involves E298.

This sequence belongs to the MurB family. The cofactor is FAD.

It is found in the cytoplasm. The enzyme catalyses UDP-N-acetyl-alpha-D-muramate + NADP(+) = UDP-N-acetyl-3-O-(1-carboxyvinyl)-alpha-D-glucosamine + NADPH + H(+). It functions in the pathway cell wall biogenesis; peptidoglycan biosynthesis. Functionally, cell wall formation. In Methylorubrum populi (strain ATCC BAA-705 / NCIMB 13946 / BJ001) (Methylobacterium populi), this protein is UDP-N-acetylenolpyruvoylglucosamine reductase.